A 4043-amino-acid chain; its full sequence is Polyketide synthase-nonribosomal peptide synthetase (4043 aa).

A Ketosynthase family 3 (KS3) domain is found at 8–446; that stretch reads SEPIAIIGTG…GANSHAILES (439 aa). Catalysis depends on for beta-ketoacyl synthase activity residues cysteine 181, histidine 320, and histidine 366. Residues 557–877 form an acyl transferase region; sequence VFTGQGAQWA…SRGNSDVEAF (321 aa). The segment at 944-1078 is N-terminal hotdog fold; that stretch reads NELLGRQVLD…CRLRITVGDS (135 aa). The PKS/mFAS DH domain maps to 944–1246; sequence NELLGRQVLD…TQPLSSPTEA (303 aa). Residues 945-1243 are dehydratase (DH) domain; that stretch reads ELLGRQVLDG…GLQTQPLSSP (299 aa). Histidine 976 (proton acceptor; for dehydratase activity) is an active-site residue. The C-terminal hotdog fold stretch occupies residues 1093–1246; sequence LLEVESDRFY…TQPLSSPTEA (154 aa). Aspartate 1154 (proton donor; for dehydratase activity) is an active-site residue. The segment at 1400–1585 is methyltransferase (MT) domain; that stretch reads RYTKYLAAMA…GIETAIPHHD (186 aa). Residues 2115–2288 are ketoreductase (KR)domain; it reads TYWLVGLTGG…NASAVHIGAI (174 aa). A Carrier 1 domain is found at 2394-2475; it reads SSSADIYDII…EMVTQAQELL (82 aa). Residues 2395-2472 form a peptidyl carrier protein region; it reads SSADIYDIIS…TVGEMVTQAQ (78 aa). At serine 2435 the chain carries O-(pantetheine 4'-phosphoryl)serine. 2 disordered regions span residues 2476–2575 and 2587–2630; these read PKEL…DPSR and EKHL…SQII. Composition is skewed to polar residues over residues 2494–2512 and 2520–2534; these read PKNTVQPKQQTKKTIQLQN and ALSQQVSSGVQNMIK. Basic and acidic residues predominate over residues 2537-2550; it reads PPKEAEAKQPRPEV. The span at 2617–2627 shows a compositional bias: low complexity; that stretch reads TSSSSSSTSAS. Positions 2640-3069 are condensation; it reads KSVPMAFGQS…NPALRLNVPP (430 aa). Residues 3102–3502 form an adenylation region; it reads EIVERYPTHV…EGNLILGGRI (401 aa). Positions 3617 to 3697 constitute a Carrier 2 domain; the sequence is TDESPSMAKM…GMVSLIDHSE (81 aa). The segment at 3622-3694 is thiolation; that stretch reads SMAKMRDVWA…SLTGMVSLID (73 aa). Residue serine 3657 is modified to O-(pantetheine 4'-phosphoryl)serine. Positions 3735-3954 are reductase-like; sequence LTGATGFLGR…DFVSADRVAM (220 aa).

This sequence in the C-terminal section; belongs to the NRP synthetase family.

Its pathway is mycotoxin biosynthesis. Hybrid PKS-NRPS synthetase; part of the gene cluster that mediates the biosynthesis of the mycotoxins cytochalasins E and K. The hybrid PKS-NRPS synthetase ccsA and the enoyl reductase ccsC are responsible for fusion of phenylalanine with an octaketide backbone and subsequent release of the stable tetramic acid precursor. The polyketide synthase module (PKS) of the PKS-NRPS ccsA is responsible for the synthesis of the octaketide backbone. The downstream nonribosomal peptide synthetase (NRPS) amidates the carboxyl end of the octaketide with a phenylalanine. A reductase-like domain (R) at the C-terminus catalyzes the reductive release of the polyketide-amino acid intermediate. Because ccsA lacks a designated enoylreductase (ER) domain, the required activity is provided the enoyl reductase ccsC. Upon formation of the 11-membered carbocycle-fused perhydroisoindolone intermediate, a number of oxidative steps are required to afford the final cytochalasin E and K, including two hydroxylations at C17 and C18, one alcohol oxidation at C17, one epoxidation at C6 and C7 and two Baeyer-Villiger oxidations. The oxidative modification at C17, C18 and the C6-C7 epoxidation are likely to be catalyzed by the two cytochrome P450 oxygenases ccsD and ccsG. CcsD may be responsible for the epoxidation of the C6-C7 double bond. CcsG may be responsible for the successive oxidative modifications at C17 and C18. The double Baeyer-Villiger oxidations of ketocytochalasin to precytochalasin and cytochalasin Z(16) are among the final steps leading to cytochalasin E and K and are catalyzed by ccsB. The first oxygen insertion step follows that of the classic BVMO mechanism, generating the ester precytochalasin. Release of precytochalasin into an aqueous environment can generate the shunt product iso-precytochalasin through spontaneous isomerization. Alternatively, precytochalasin can undergo further oxidation by ccsB to yield the in-line carbonate-containing cytochalasin Z(16). Cytochalasin Z(16) is a precursor to cytochalasin E and cytochalasin K, whereas iso-precytochalasin is a precursor to cytochalasin Z(17) and rosellichalasin. The hydrolyase ccsE may catalyze hydrolysis of epoxide bond in cytochalasin E to afford cytochalasin K. The function of ccsF has not been assigned but it may play a role in post-PKS-NRPS biosynthetic step, resistance or transport of cytochalasins and related PKS-NRPS products. This chain is Polyketide synthase-nonribosomal peptide synthetase, found in Aspergillus clavatus (strain ATCC 1007 / CBS 513.65 / DSM 816 / NCTC 3887 / NRRL 1 / QM 1276 / 107).